Reading from the N-terminus, the 253-residue chain is Probable transcriptional regulatory protein KRH_13670 (253 aa).

It belongs to the TACO1 family.

It is found in the cytoplasm. This is Probable transcriptional regulatory protein KRH_13670 from Kocuria rhizophila (strain ATCC 9341 / DSM 348 / NBRC 103217 / DC2201).